The following is a 204-amino-acid chain: Leucyl/phenylalanyl-tRNA--protein transferase (204 aa).

It belongs to the L/F-transferase family.

The protein resides in the cytoplasm. It carries out the reaction N-terminal L-lysyl-[protein] + L-leucyl-tRNA(Leu) = N-terminal L-leucyl-L-lysyl-[protein] + tRNA(Leu) + H(+). It catalyses the reaction N-terminal L-arginyl-[protein] + L-leucyl-tRNA(Leu) = N-terminal L-leucyl-L-arginyl-[protein] + tRNA(Leu) + H(+). The enzyme catalyses L-phenylalanyl-tRNA(Phe) + an N-terminal L-alpha-aminoacyl-[protein] = an N-terminal L-phenylalanyl-L-alpha-aminoacyl-[protein] + tRNA(Phe). In terms of biological role, functions in the N-end rule pathway of protein degradation where it conjugates Leu, Phe and, less efficiently, Met from aminoacyl-tRNAs to the N-termini of proteins containing an N-terminal arginine or lysine. This chain is Leucyl/phenylalanyl-tRNA--protein transferase, found in Rhizobium meliloti (strain 1021) (Ensifer meliloti).